Reading from the N-terminus, the 216-residue chain is Ribonuclease HII (216 aa).

In terms of domain architecture, RNase H type-2 spans 27 to 216; the sequence is ASLAGVDEAG…VKEHVKNCEG (190 aa). Aspartate 33, glutamate 34, and aspartate 125 together coordinate a divalent metal cation.

This sequence belongs to the RNase HII family. Mn(2+) is required as a cofactor. Mg(2+) serves as cofactor.

The protein localises to the cytoplasm. It carries out the reaction Endonucleolytic cleavage to 5'-phosphomonoester.. Functionally, endonuclease that specifically degrades the RNA of RNA-DNA hybrids. The sequence is that of Ribonuclease HII from Geotalea daltonii (strain DSM 22248 / JCM 15807 / FRC-32) (Geobacter daltonii).